The chain runs to 214 residues: Scytalone dehydratase-like protein mdpB (214 aa).

The substrate site is built by Y40 and Y60. Active-site residues include H95 and H120.

This sequence belongs to the scytalone dehydratase family.

It participates in secondary metabolite biosynthesis. Functionally, scytalone dehydratase-like protein; part of the gene cluster that mediates the biosynthesis of monodictyphenone, a prenyl xanthone derivative. The pathway begins with the synthesis of atrochrysone thioester by the polyketide synthase (PKS) mdpG. The atrochrysone carboxyl ACP thioesterase mdpF then breaks the thioester bond and releases the atrochrysone carboxylic acid from mdpG. The atrochrysone carboxylic acid is then converted to atrochrysone which is further transformed into emodin anthrone. The next step is performed by the anthrone oxygenase mdpH that catalyzes the oxidation of emodinanthrone to emodin. Emodin is further modified to yield monodictyphenone via several steps involving mdpB, mdpC mdpJ, mdpK and mdpL. These enzymes with xptA, xptB and xptC are also proposed to be involved in the synthesis of shamixanthone from emodin. Especially, direct reduction of emodin by the short chain dehydrogenase mdpC followed by dehydration catalyzed by the scytalone dehydratase-like protein mdpB gives loss of oxygen and formation of chrysophanol intermediate in two simple steps. The sequence is that of Scytalone dehydratase-like protein mdpB from Emericella nidulans (strain FGSC A4 / ATCC 38163 / CBS 112.46 / NRRL 194 / M139) (Aspergillus nidulans).